The primary structure comprises 356 residues: Nicotinate-nucleotide--dimethylbenzimidazole phosphoribosyltransferase (356 aa).

Glutamate 317 functions as the Proton acceptor in the catalytic mechanism.

This sequence belongs to the CobT family. Homodimer.

It carries out the reaction 5,6-dimethylbenzimidazole + nicotinate beta-D-ribonucleotide = alpha-ribazole 5'-phosphate + nicotinate + H(+). Its pathway is nucleoside biosynthesis; alpha-ribazole biosynthesis; alpha-ribazole from 5,6-dimethylbenzimidazole: step 1/2. In terms of biological role, catalyzes the synthesis of alpha-ribazole-5'-phosphate from nicotinate mononucleotide (NAMN) and 5,6-dimethylbenzimidazole (DMB). In Salmonella gallinarum (strain 287/91 / NCTC 13346), this protein is Nicotinate-nucleotide--dimethylbenzimidazole phosphoribosyltransferase.